A 416-amino-acid chain; its full sequence is Solute carrier family 35 member D3 (416 aa).

The next 10 helical transmembrane spans lie at 9-29, 38-58, 64-84, 103-123, 131-151, 155-175, 187-207, 224-244, 257-277, and 280-300; these read VLGI…NILL, FSFL…SLEL, LIAV…VAVL, MYVV…VLVL, GVLA…AGDL, PIGY…LVLI, LTAQ…CSFA, AMVC…FTTL, FVGV…FSDV, and TSLF…YCVA. Positions 334–384 are disordered; sequence MEELPGEGGNGRSEGGEAAGGPAQESRQEVRGSPRGVPLVAGSSEEGSRRS. Positions 339-352 are enriched in gly residues; that stretch reads GEGGNGRSEGGEAA.

This sequence belongs to the TPT transporter family. SLC35D subfamily. In terms of assembly, could interact with ATG14, BECN1 and PIK3C3 that form the PI3KC3-C1/AIC/autophagy initiation complex; enhancing the formation of the AIC and promoting autophagy.

It is found in the cytoplasmic vesicle. The protein resides in the secretory vesicle. Its subcellular location is the synaptic vesicle membrane. It localises to the early endosome membrane. The protein localises to the endoplasmic reticulum membrane. It carries out the reaction UDP-alpha-D-glucose(in) = UDP-alpha-D-glucose(out). Its activity is regulated as follows. Inhibited by proton uncouplers that directly abolish the proton electrochemical gradient. Its function is as follows. Probable UDP-glucose transmembrane transporter involved in UDP-glucose transport from the cytosol to the lumen of synaptic vesicles. It is involved in platelet dense granules maturation. Alternatively, could function as a molecular adapter enhancing the formation of the PI3KC3-C1/AIC/autophagy initiation complex to promote autophagy in dopaminergic neurons. Could also regulate the plasma membrane localization of the D(1A) dopamine receptor/DRD1 and dopamine signaling. This chain is Solute carrier family 35 member D3, found in Homo sapiens (Human).